A 99-amino-acid chain; its full sequence is Large ribosomal subunit protein bL21 (99 aa).

This sequence belongs to the bacterial ribosomal protein bL21 family. As to quaternary structure, part of the 50S ribosomal subunit. Contacts protein L20.

This protein binds to 23S rRNA in the presence of protein L20. The polypeptide is Large ribosomal subunit protein bL21 (Mesomycoplasma hyopneumoniae (strain 232) (Mycoplasma hyopneumoniae)).